The chain runs to 231 residues: 5'-methylthioadenosine/S-adenosylhomocysteine nucleosidase (231 aa).

Residue E12 is the Proton acceptor of the active site. Substrate-binding positions include G78, M153, and 174 to 175; that span reads ME. D198 (proton donor) is an active-site residue.

This sequence belongs to the PNP/UDP phosphorylase family. MtnN subfamily.

The catalysed reaction is S-adenosyl-L-homocysteine + H2O = S-(5-deoxy-D-ribos-5-yl)-L-homocysteine + adenine. It carries out the reaction S-methyl-5'-thioadenosine + H2O = 5-(methylsulfanyl)-D-ribose + adenine. The enzyme catalyses 5'-deoxyadenosine + H2O = 5-deoxy-D-ribose + adenine. Its pathway is amino-acid biosynthesis; L-methionine biosynthesis via salvage pathway; S-methyl-5-thio-alpha-D-ribose 1-phosphate from S-methyl-5'-thioadenosine (hydrolase route): step 1/2. In terms of biological role, catalyzes the irreversible cleavage of the glycosidic bond in both 5'-methylthioadenosine (MTA) and S-adenosylhomocysteine (SAH/AdoHcy) to adenine and the corresponding thioribose, 5'-methylthioribose and S-ribosylhomocysteine, respectively. Also cleaves 5'-deoxyadenosine, a toxic by-product of radical S-adenosylmethionine (SAM) enzymes, into 5-deoxyribose and adenine. This Bacillus cytotoxicus (strain DSM 22905 / CIP 110041 / 391-98 / NVH 391-98) protein is 5'-methylthioadenosine/S-adenosylhomocysteine nucleosidase.